The chain runs to 256 residues: NH(3)-dependent NAD(+) synthetase (256 aa).

An ATP-binding site is contributed by 29–36 (GISGGIDS). Residue aspartate 35 coordinates Mg(2+). Deamido-NAD(+) is bound at residue arginine 115. Position 135 (threonine 135) interacts with ATP. Glutamate 140 provides a ligand contact to Mg(2+). Deamido-NAD(+)-binding residues include lysine 148 and aspartate 155. Positions 164 and 186 each coordinate ATP. 245–246 (HK) lines the deamido-NAD(+) pocket.

The protein belongs to the NAD synthetase family. Homodimer.

It catalyses the reaction deamido-NAD(+) + NH4(+) + ATP = AMP + diphosphate + NAD(+) + H(+). It participates in cofactor biosynthesis; NAD(+) biosynthesis; NAD(+) from deamido-NAD(+) (ammonia route): step 1/1. In terms of biological role, catalyzes the ATP-dependent amidation of deamido-NAD to form NAD. Uses ammonia as a nitrogen source. The polypeptide is NH(3)-dependent NAD(+) synthetase (Methanosarcina acetivorans (strain ATCC 35395 / DSM 2834 / JCM 12185 / C2A)).